Consider the following 296-residue polypeptide: D-alanine--D-alanine ligase (296 aa).

An ATP-grasp domain is found at 103–293 (KEILMHYRMP…FDSFVKRIIE (191 aa)). Residue 129–180 (ISFPVAVKPSSGGSSIATFKVKSIQELKHAYEEASKYGEVMIEQWVTGKEIT) participates in ATP binding. Residues aspartate 247, glutamate 260, and asparagine 262 each coordinate Mg(2+).

This sequence belongs to the D-alanine--D-alanine ligase family. Requires Mg(2+) as cofactor. Mn(2+) serves as cofactor.

It localises to the cytoplasm. The catalysed reaction is 2 D-alanine + ATP = D-alanyl-D-alanine + ADP + phosphate + H(+). The protein operates within cell wall biogenesis; peptidoglycan biosynthesis. Functionally, cell wall formation. The sequence is that of D-alanine--D-alanine ligase from Francisella tularensis subsp. tularensis (strain WY96-3418).